Reading from the N-terminus, the 360-residue chain is Catabolic L-serine/threonine dehydratase (360 aa).

An N-acetylserine modification is found at serine 2. An N6-(pyridoxal phosphate)lysine modification is found at lysine 37.

Belongs to the serine/threonine dehydratase family. It depends on pyridoxal 5'-phosphate as a cofactor.

It is found in the mitochondrion. It catalyses the reaction L-serine = pyruvate + NH4(+). The enzyme catalyses L-threonine = 2-oxobutanoate + NH4(+). In Saccharomyces cerevisiae (strain ATCC 204508 / S288c) (Baker's yeast), this protein is Catabolic L-serine/threonine dehydratase (CHA1).